The primary structure comprises 340 residues: TATA-box-binding protein (340 aa).

The interval 1-78 (MNLNSPAVSM…HSLQGSSMQM (78 aa)) is disordered. The segment covering 57-68 (PQSIQPMQSQQM) has biased composition (low complexity). Polar residues predominate over residues 69 to 78 (HSLQGSSMQM). Repeat copies occupy residues 168-244 (LQNI…ARIV) and 258-335 (VQNM…YPIL).

This sequence belongs to the TBP family. In terms of assembly, component of the TFIID basal transcription factor complex, composed of TATA-box-binding protein tbp-1, and a number of TBP-associated factors (TAFs). Binds DNA as monomer.

The protein resides in the nucleus. Its function is as follows. The TFIID basal transcription factor complex plays a major role in the initiation of RNA polymerase II (Pol II)-dependent transcription. TFIID recognizes and binds promoters via its subunit tbp-1, a TATA-box-binding protein, and promotes assembly of the pre-initiation complex (PIC). The TFIID complex consists of tbp-1 and TBP-associated factors (TAFs). General transcription factor that functions at the core of the TFIID complex. In Caenorhabditis elegans, this protein is TATA-box-binding protein (tbp-1).